Consider the following 158-residue polypeptide: NADPH-dependent 7-cyano-7-deazaguanine reductase (158 aa).

Residues 1-13 (MAKRSNTTMTSAG) show a composition bias toward polar residues. Residues 1–37 (MAKRSNTTMTSAGLQLGREVAPPDSPETAKLDRVPNP) are disordered. Residues 27–37 (ETAKLDRVPNP) are compositionally biased toward basic and acidic residues. The active-site Thioimide intermediate is cysteine 56. The active-site Proton donor is aspartate 63. Substrate-binding positions include 78-80 (VES) and 97-98 (HE).

Belongs to the GTP cyclohydrolase I family. QueF type 1 subfamily.

It is found in the cytoplasm. It catalyses the reaction 7-aminomethyl-7-carbaguanine + 2 NADP(+) = 7-cyano-7-deazaguanine + 2 NADPH + 3 H(+). Its pathway is tRNA modification; tRNA-queuosine biosynthesis. Its function is as follows. Catalyzes the NADPH-dependent reduction of 7-cyano-7-deazaguanine (preQ0) to 7-aminomethyl-7-deazaguanine (preQ1). The chain is NADPH-dependent 7-cyano-7-deazaguanine reductase from Bradyrhizobium sp. (strain ORS 278).